Consider the following 225-residue polypeptide: uncharacterized protein (225 aa).

A run of 6 helical transmembrane segments spans residues 1 to 21 (MFIGIVSLFLTVLVYLGAKKV), 31 to 51 (SPLLVTPAVLVGLLLLVNVPY), 56 to 76 (LGGGLLTDMLQPATVAFAIPL), 88 to 108 (VEIILNVAVGSCIAIISTALI), 145 to 165 (VTAVFVILTALLGTVIGPMVI), and 205 to 225 (VSMILAAIMTLCAAPFLLSFM).

It belongs to the YohK (E.coli)/YwbG (IPA-22R) (B.subtilis) family.

The protein resides in the cell membrane. This is an uncharacterized protein from Bacillus subtilis (strain 168).